Reading from the N-terminus, the 106-residue chain is UPF0145 protein SCO3412 (106 aa).

The protein belongs to the UPF0145 family.

The protein is UPF0145 protein SCO3412 of Streptomyces coelicolor (strain ATCC BAA-471 / A3(2) / M145).